Reading from the N-terminus, the 177-residue chain is Nucleoside triphosphate/diphosphate phosphatase (177 aa).

The active-site Proton donor is the R23. Mg(2+) is bound by residues N87, D103, D105, D107, D120, and E123.

Belongs to the Ntdp family. Mg(2+) serves as cofactor.

It carries out the reaction a ribonucleoside 5'-triphosphate + H2O = a ribonucleoside 5'-diphosphate + phosphate + H(+). The catalysed reaction is a ribonucleoside 5'-diphosphate + H2O = a ribonucleoside 5'-phosphate + phosphate + H(+). Its function is as follows. Has nucleoside phosphatase activity towards nucleoside triphosphates and nucleoside diphosphates. This Streptococcus gordonii (strain Challis / ATCC 35105 / BCRC 15272 / CH1 / DL1 / V288) protein is Nucleoside triphosphate/diphosphate phosphatase.